We begin with the raw amino-acid sequence, 234 residues long: UPF0173 metal-dependent hydrolase RHECIAT_CH0001941 (234 aa).

This sequence belongs to the UPF0173 family.

This Rhizobium etli (strain CIAT 652) protein is UPF0173 metal-dependent hydrolase RHECIAT_CH0001941.